The primary structure comprises 438 residues: Adenylosuccinate synthetase (438 aa).

GTP contacts are provided by residues 13–19 and 41–43; these read GDEGKGK and GHT. D14 functions as the Proton acceptor in the catalytic mechanism. 2 residues coordinate Mg(2+): D14 and G41. Residues 14 to 17, 39 to 42, T130, R144, Q225, T240, and R312 contribute to the IMP site; these read DEGK and NAGH. The Proton donor role is filled by H42. 308–314 is a binding site for substrate; it reads ATTGRQR. GTP-binding positions include R314, 340–342, and 422–424; these read KLD and STG.

This sequence belongs to the adenylosuccinate synthetase family. In terms of assembly, homodimer. Mg(2+) serves as cofactor.

It is found in the cytoplasm. It catalyses the reaction IMP + L-aspartate + GTP = N(6)-(1,2-dicarboxyethyl)-AMP + GDP + phosphate + 2 H(+). Its pathway is purine metabolism; AMP biosynthesis via de novo pathway; AMP from IMP: step 1/2. In terms of biological role, plays an important role in the de novo pathway of purine nucleotide biosynthesis. Catalyzes the first committed step in the biosynthesis of AMP from IMP. This chain is Adenylosuccinate synthetase, found in Vesicomyosocius okutanii subsp. Calyptogena okutanii (strain HA).